Here is a 462-residue protein sequence, read N- to C-terminus: Myrosinase-binding protein 1 (462 aa).

Residues 1 to 23 (MSTGGPQKLEAQGGKEGKEWDDG) are disordered. 3 Jacalin-type lectin domains span residues 6–148 (PQKL…YFAP), 157–300 (PNKV…YFAP), and 310–453 (TKKL…HIVP). Basic and acidic residues predominate over residues 13–23 (GGKEGKEWDDG).

This sequence belongs to the jacalin lectin family. Expressed exclusively in flowers, in male and female organs, petals and pedicels. Not detected in pollen grains or sepals.

The polypeptide is Myrosinase-binding protein 1 (MBP1) (Arabidopsis thaliana (Mouse-ear cress)).